The chain runs to 110 residues: Large ribosomal subunit protein uL22 (110 aa).

Belongs to the universal ribosomal protein uL22 family. Part of the 50S ribosomal subunit.

Functionally, this protein binds specifically to 23S rRNA; its binding is stimulated by other ribosomal proteins, e.g. L4, L17, and L20. It is important during the early stages of 50S assembly. It makes multiple contacts with different domains of the 23S rRNA in the assembled 50S subunit and ribosome. Its function is as follows. The globular domain of the protein is located near the polypeptide exit tunnel on the outside of the subunit, while an extended beta-hairpin is found that lines the wall of the exit tunnel in the center of the 70S ribosome. The polypeptide is Large ribosomal subunit protein uL22 (Leptospira interrogans serogroup Icterohaemorrhagiae serovar copenhageni (strain Fiocruz L1-130)).